The following is a 23-amino-acid chain: Mu-conotoxin-like SxIIIB (23 aa).

Gln-1 carries the pyrrolidone carboxylic acid modification. Intrachain disulfides connect Cys-3/Cys-16, Cys-4/Cys-21, and Cys-11/Cys-22. Ala-23 is modified (alanine amide).

Belongs to the conotoxin M superfamily. Expressed by the venom duct.

It is found in the secreted. Mu-conotoxins block voltage-gated sodium channels (Nav). The protein is Mu-conotoxin-like SxIIIB of Conus striolatus (Cone snail).